The chain runs to 582 residues: Semenogelin-2 (582 aa).

The N-terminal stretch at 1–23 (MKSIILFVLSLLLILEKQAAVMG) is a signal peptide. Residues 24–59 (QKGGSKGQLPSGSSQFPHGQKGQHYFGQKDQQHTKS) are disordered. Positions 31–40 (QLPSGSSQFP) are enriched in polar residues. A run of 3 repeats spans residues 70–129 (HVDI…IVIH), 141–200 (NPSQ…QTEE), and 201–260 (LVVN…QDEL). Residues 70-559 (HVDINDHDWT…SSESHNIVIT (490 aa)) form a repeat-rich region region. Disordered stretches follow at residues 132-160 (GGQA…SQCS), 173-194 (KEQA…QSSY), 228-248 (EEHS…RLQH), and 269-582 (QTKN…PIST). Composition is skewed to polar residues over residues 137-160 (HGTQ…SQCS) and 174-194 (EQAS…QSSY). Residues 261–500 (LVYNKNQHQT…QSSISFQIEK (240 aa)) form a 4 X 60 AA tandem repeats, type I region. N-linked (GlcNAc...) asparagine glycosylation is present at Asn-272. The segment covering 292 to 310 (RTEERQLHHGEKSVQKDVS) has biased composition (basic and acidic residues). The segment covering 325-334 (KSQNQVTIHS) has biased composition (polar residues). The span at 335 to 345 (QDQEHGHKENK) shows a compositional bias: basic and acidic residues. Polar residues predominate over residues 372–397 (GSISIQTEEQIHGKSQNQVRIPSQAQ). Positions 413-426 (TEERRLNSGEKDVQ) are enriched in basic and acidic residues. Residues 445 to 455 (KSQNQVTIPSQ) show a composition bias toward polar residues. The segment covering 456–465 (DQEHGHKENK) has biased composition (basic and acidic residues). 2 stretches are compositionally biased toward polar residues: residues 482 to 496 (GKST…SISF) and 506 to 532 (SQIQ…QSAD). The stretch at 501–559 (LVEGKSQIQTPNPNQDQWSGQNAKGKSGQSADSKQDLLSHEQKGRYKQESSESHNIVIT) is one 3-2 repeat. Basic and acidic residues-rich tracts occupy residues 533-552 (SKQD…ESSE) and 559-582 (TEHE…PIST).

The protein belongs to the semenogelin family. In terms of assembly, interacts with SERPINA5. In terms of processing, semenogelin-2 is thought to form both the 71 kDa polypeptide and, in its glycosylated form, the 76 kDa polypeptide. As to expression, seminal vesicles, and to a much lesser extent, epididymis.

It localises to the secreted. Functionally, participates in the formation of a gel matrix (sperm coagulum) entrapping the accessory gland secretions and ejaculated spermatozoa. This chain is Semenogelin-2 (SEMG2), found in Homo sapiens (Human).